The sequence spans 363 residues: dTDP-L-rhamnose 4-epimerase (363 aa).

NAD(+) contacts are provided by residues 18–24 (GGAGFIG), 68–69 (DV), and 90–94 (LAAET). Residues serine 136 and tyrosine 191 each coordinate substrate. Residues tyrosine 191 and lysine 195 each contribute to the NAD(+) site. Tyrosine 191 serves as the catalytic Proton acceptor. 2 residues coordinate substrate: asparagine 220 and arginine 259.

Belongs to the NAD(P)-dependent epimerase/dehydratase family. Requires NAD(+) as cofactor.

It carries out the reaction dTDP-6-deoxy-beta-L-talose = dTDP-beta-L-rhamnose. It participates in bacterial outer membrane biogenesis; LPS O-antigen biosynthesis. In terms of biological role, catalyzes the interconvertion of dTDP-6-deoxy-L-talose and dTDP-L-rhamnose. The equilibrium is strongly toward dTDP-L-rhamnose. In Burkholderia thailandensis (strain ATCC 700388 / DSM 13276 / CCUG 48851 / CIP 106301 / E264), this protein is dTDP-L-rhamnose 4-epimerase (wbiB).